A 327-amino-acid polypeptide reads, in one-letter code: tRNA uridine(34) hydroxylase (327 aa).

Residues 123 to 217 (SDPEVLLVDT…YLEEVKLEES (95 aa)) form the Rhodanese domain. Catalysis depends on Cys177, which acts as the Cysteine persulfide intermediate.

The protein belongs to the TrhO family.

It catalyses the reaction uridine(34) in tRNA + AH2 + O2 = 5-hydroxyuridine(34) in tRNA + A + H2O. In terms of biological role, catalyzes oxygen-dependent 5-hydroxyuridine (ho5U) modification at position 34 in tRNAs. This chain is tRNA uridine(34) hydroxylase, found in Shewanella pealeana (strain ATCC 700345 / ANG-SQ1).